A 223-amino-acid polypeptide reads, in one-letter code: Ribose-5-phosphate isomerase A (223 aa).

Residues 32–35, 83–86, and 96–99 contribute to the substrate site; these read TGST, DGAD, and KGGG. Glutamate 105 acts as the Proton acceptor in catalysis. A substrate-binding site is contributed by lysine 123.

The protein belongs to the ribose 5-phosphate isomerase family. As to quaternary structure, homodimer.

It catalyses the reaction aldehydo-D-ribose 5-phosphate = D-ribulose 5-phosphate. Its pathway is carbohydrate degradation; pentose phosphate pathway; D-ribose 5-phosphate from D-ribulose 5-phosphate (non-oxidative stage): step 1/1. Catalyzes the reversible conversion of ribose-5-phosphate to ribulose 5-phosphate. The polypeptide is Ribose-5-phosphate isomerase A (Acinetobacter baumannii (strain SDF)).